The chain runs to 226 residues: Hand transcription factor 1 (226 aa).

The span at 1 to 15 (MVKSTTAGNNAVSSL) shows a compositional bias: polar residues. The disordered stretch occupies residues 1 to 35 (MVKSTTAGNNAVSSLESTDSKKSRKEKSREKEHRR). The segment at 23-36 (SRKEKSREKEHRRA) is basic motif. Residues 23-77 (SRKEKSREKEHRRAQCINSAFEILQQHIPYLKSEERKSLPKIKTLRLAMQYIDHL) form the bHLH domain. The interval 37-77 (QCINSAFEILQQHIPYLKSEERKSLPKIKTLRLAMQYIDHL) is helix-loop-helix motif.

It localises to the nucleus. Its function is as follows. Probable transcription factor which regulates early embryonic myogenesis, in cooperation with transcription factors unc-120 and hlh-1. Involved in controlling the number and position of somatic gonadal precursor cells (SGPs) in the gonadal primordium, and embryonic body shape. In Caenorhabditis elegans, this protein is Hand transcription factor 1.